Consider the following 795-residue polypeptide: TBC1 domain family member 5 (795 aa).

Residues 1-13 (MYHSLSETRHPLQ) show a composition bias toward basic and acidic residues. Residues 1–49 (MYHSLSETRHPLQPEEQEVGIDPLSSYSNKSGGDSNKNGRRTSSTLDSE) form a disordered region. Positions 25 to 49 (SSYSNKSGGDSNKNGRRTSSTLDSE) are enriched in polar residues. Thr-42 carries the phosphothreonine modification. Ser-43 and Ser-44 each carry phosphoserine. Residues 56 to 64 (RKEWEELFV) are required for interaction with retromer; involved in interaction with ATG8 family proteins. Residues 57 to 62 (KEWEEL) carry the LIR 1 motif. One can recognise a Rab-GAP TBC domain in the interval 81–359 (LRSSRFRSIC…VVWDALFADG (279 aa)). A Phosphoserine modification is found at Ser-460. A disordered region spans residues 475-564 (PGSAGGPVPG…PPSSATKKDS (90 aa)). Low complexity predominate over residues 484–496 (GGNSSSSSSVVIP). Phosphoserine is present on residues Ser-522, Ser-539, Ser-541, Ser-544, Ser-554, Ser-570, Ser-584, and Ser-730. A compositionally biased stretch (polar residues) spans 523–542 (MPVQLNKGLSSKNISSSPSV). Residues 554 to 564 (SPPSSATKKDS) are compositionally biased toward polar residues. Positions 674-795 (HYCSSGQGQG…GFTIVSPLDI (122 aa)) are disordered. Positions 727-748 (ARGSFSGQAQPLRTLRSTSGKS) are enriched in polar residues. The segment covering 765–776 (PASASSSNPSSS) has biased composition (low complexity). An LIR 2 motif is present at residues 785–789 (SGFTI). The segment at 786 to 791 (GFTIVS) is required for interaction with ATG8 family proteins. The residue at position 791 (Ser-791) is a Phosphoserine.

As to quaternary structure, interacts with MAP1LC3A, MAP1LC3B, MAP1LC3C, GABARAP, GABARAPL1, GABARAPL2. Interacts with VPS29 and VPS35; indicative for an association with retromer CSC subcomplex. MAP1LC3A and VPS29 compete for binding to TBC1D5. Interacts with AP2M1; indicative for an association with the AP2 complex. Interacts with ULK1 and ATG13 (phosphorylated); indicative for an association with the activated ULK1-ATG13-FIP200 complex. Interacts with ATG9A; the interactions seems to be restricted to the AP2-clathrin-associated fraction of ATG9A.

Its subcellular location is the endosome membrane. It localises to the cytoplasmic vesicle. It is found in the autophagosome. Its function is as follows. May act as a GTPase-activating protein (GAP) for Rab family protein(s). May act as a GAP for RAB7A. Can displace RAB7A and retromer CSC subcomplex from the endosomal membrane to the cytosol; at least retromer displacement seems to require its catalytic activity. Required for retrograde transport of cargo proteins from endosomes to the trans-Golgi network (TGN); the function seems to require its catalytic activity. Involved in regulation of autophagy. May act as a molecular switch between endosomal and autophagosomal transport and is involved in reprogramming vesicle trafficking upon autophagy induction. Involved in the trafficking of ATG9A upon activation of autophagy. May regulate the recruitment of ATG9A-AP2-containing vesicles to autophagic membranes. The polypeptide is TBC1 domain family member 5 (TBC1D5) (Homo sapiens (Human)).